A 434-amino-acid polypeptide reads, in one-letter code: MDQLQIRGGRALSGDVPISGAKNAALPELCAALLTAEPVTLLNVPRLQDVATMLQLIRNMGVAAEHSQGDDRASSGTVRIDAGALSTPEAPYELVKTMRASVLALGPLLARFGEATVSLPGGCAIGSRPVDQHIKGLSAMGAEIVVEHGYMIARLPEGRSRLQGARITTDMVTVTGTENLLMAATLADGETVLENAAQEPEVVDLAEMLIAMGAQIEGHGTSRIRVQGVERLHGCTHRVVADRIEAGTFLCAVAATGGEALLRHGRADHLDAVIDKLRDAGVTVEAVDGGIRVRSPGAGQLQAQSFRTTEYPGFPTDMQAQFMALNVVAQGTSRVTETIFENRFMHVDELLRLGARIQADGKVAVIEGLGDTGALLSGATVMATDLRASASLVIAGLVATGQTTVDRIYHLDRGYDCMEGKLRALGADIERVKA.

Residue 22–23 (KN) participates in phosphoenolpyruvate binding. R99 contacts UDP-N-acetyl-alpha-D-glucosamine. The Proton donor role is filled by C123. At C123 the chain carries 2-(S-cysteinyl)pyruvic acid O-phosphothioketal. Residues 128–132 (RPVDQ), D317, and I339 contribute to the UDP-N-acetyl-alpha-D-glucosamine site.

This sequence belongs to the EPSP synthase family. MurA subfamily.

It localises to the cytoplasm. It carries out the reaction phosphoenolpyruvate + UDP-N-acetyl-alpha-D-glucosamine = UDP-N-acetyl-3-O-(1-carboxyvinyl)-alpha-D-glucosamine + phosphate. Its pathway is cell wall biogenesis; peptidoglycan biosynthesis. Its function is as follows. Cell wall formation. Adds enolpyruvyl to UDP-N-acetylglucosamine. The protein is UDP-N-acetylglucosamine 1-carboxyvinyltransferase of Paracidovorax citrulli (strain AAC00-1) (Acidovorax citrulli).